A 551-amino-acid chain; its full sequence is Probable 4-coumarate--CoA ligase 3 (551 aa).

Residues Ser205, Ser206, Gly207, Thr208, Thr209, and Lys213 each coordinate ATP. Phe253 provides a ligand contact to (E)-4-coumaroyl-AMP. A CoA-binding site is contributed by Lys274. Residues 276–346 form an SBD1 region; it reads EPVRFLELIK…RFKGRLVIKQ (71 aa). Ala323, Gln346, Gly347, and Thr351 together coordinate (E)-4-coumaroyl-AMP. 5 residues coordinate ATP: Gln346, Gly347, Thr351, Asp430, and Arg445. An SBD2 region spans residues 347-409; sequence GYGATELSPC…IKGPNVMLGY (63 aa). (E)-4-coumaroyl-AMP-binding residues include Lys447 and Lys451. CoA contacts are provided by Lys453 and Gly454. An ATP-binding site is contributed by Lys537.

Belongs to the ATP-dependent AMP-binding enzyme family. Mg(2+) serves as cofactor.

The catalysed reaction is (E)-4-coumarate + ATP + CoA = (E)-4-coumaroyl-CoA + AMP + diphosphate. It catalyses the reaction (E)-4-coumarate + ATP + H(+) = (E)-4-coumaroyl-AMP + diphosphate. It carries out the reaction (E)-4-coumaroyl-AMP + CoA = (E)-4-coumaroyl-CoA + AMP + H(+). The protein operates within phytoalexin biosynthesis; 3,4',5-trihydroxystilbene biosynthesis; 3,4',5-trihydroxystilbene from trans-4-coumarate: step 1/2. Its function is as follows. Carboxylate--CoA ligase that may use 4-coumarate as substrate. Follows a two-step reaction mechanism, wherein the carboxylate substrate first undergoes adenylation by ATP, followed by a thioesterification in the presence of CoA to yield the final CoA thioester. This is Probable 4-coumarate--CoA ligase 3 (4cl3) from Dictyostelium discoideum (Social amoeba).